The following is a 247-amino-acid chain: Protein ATC1/LIC4 (247 aa).

2 disordered regions span residues 95-146 and 226-247; these read NSSA…DDQA and EKST…CPSS. A compositionally biased stretch (polar residues) spans 129–146; it reads QNPSHRISNVQSNSDDQA.

It localises to the cytoplasm. Its subcellular location is the nucleus. In terms of biological role, involved in cation homeostasis and in the regulation of the cation stress signaling cascades. In Debaryomyces hansenii (strain ATCC 36239 / CBS 767 / BCRC 21394 / JCM 1990 / NBRC 0083 / IGC 2968) (Yeast), this protein is Protein ATC1/LIC4 (ATC1).